A 373-amino-acid polypeptide reads, in one-letter code: Probable tRNA sulfurtransferase (373 aa).

The THUMP domain maps to 54–158 (NKNIEELSKV…NDVAYFYHKI (105 aa)). Residues 176–177 (LF), 201–202 (NF), Lys256, Gly278, and Gln287 each bind ATP.

Belongs to the ThiI family.

The protein localises to the cytoplasm. The enzyme catalyses [ThiI sulfur-carrier protein]-S-sulfanyl-L-cysteine + a uridine in tRNA + 2 reduced [2Fe-2S]-[ferredoxin] + ATP + H(+) = [ThiI sulfur-carrier protein]-L-cysteine + a 4-thiouridine in tRNA + 2 oxidized [2Fe-2S]-[ferredoxin] + AMP + diphosphate. The catalysed reaction is [ThiS sulfur-carrier protein]-C-terminal Gly-Gly-AMP + S-sulfanyl-L-cysteinyl-[cysteine desulfurase] + AH2 = [ThiS sulfur-carrier protein]-C-terminal-Gly-aminoethanethioate + L-cysteinyl-[cysteine desulfurase] + A + AMP + 2 H(+). It functions in the pathway cofactor biosynthesis; thiamine diphosphate biosynthesis. Functionally, catalyzes the ATP-dependent transfer of a sulfur to tRNA to produce 4-thiouridine in position 8 of tRNAs, which functions as a near-UV photosensor. Also catalyzes the transfer of sulfur to the sulfur carrier protein ThiS, forming ThiS-thiocarboxylate. This is a step in the synthesis of thiazole, in the thiamine biosynthesis pathway. The sulfur is donated as persulfide by IscS. This chain is Probable tRNA sulfurtransferase, found in Saccharolobus islandicus (strain M.14.25 / Kamchatka #1) (Sulfolobus islandicus).